A 606-amino-acid polypeptide reads, in one-letter code: NADH-ubiquinone oxidoreductase chain 5 (606 aa).

14 helical membrane-spanning segments follow: residues 1 to 21 (MNMF…PIIM), 43 to 63 (AFMI…ETII), 87 to 107 (MIFV…SMWY), 117 to 137 (FFKY…ANNM), 140 to 160 (LFIG…WWYG), 171 to 191 (AVLY…WFLL), 241 to 261 (TPVS…FLLI), 273 to 293 (IQTL…ICAL), 310 to 330 (LGLM…LHIC), 365 to 385 (VLPF…GMPF), 409 to 429 (LLIT…IMFF), 457 to 477 (LLIG…PTTI), 488 to 508 (MTAL…NLTT), and 582 to 602 (GLIK…LLIL).

It belongs to the complex I subunit 5 family. In terms of assembly, core subunit of respiratory chain NADH dehydrogenase (Complex I) which is composed of 45 different subunits.

It is found in the mitochondrion inner membrane. The catalysed reaction is a ubiquinone + NADH + 5 H(+)(in) = a ubiquinol + NAD(+) + 4 H(+)(out). In terms of biological role, core subunit of the mitochondrial membrane respiratory chain NADH dehydrogenase (Complex I) which catalyzes electron transfer from NADH through the respiratory chain, using ubiquinone as an electron acceptor. Essential for the catalytic activity and assembly of complex I. The sequence is that of NADH-ubiquinone oxidoreductase chain 5 (MT-ND5) from Canis lupus (Gray wolf).